A 594-amino-acid chain; its full sequence is Protein CBFA2T2 (594 aa).

At S24 the chain carries Phosphoserine. K29 participates in a covalent cross-link: Glycyl lysine isopeptide (Lys-Gly) (interchain with G-Cter in SUMO2). The interval G48–Q96 is disordered. 2 stretches are compositionally biased toward polar residues: residues F55 to T70 and Q79 to Q96. Residues L98 to S206 are interaction with PRDM14. In terms of domain architecture, TAFH spans A104–E199. Residues V220 to A257 are disordered. Residues P227–V242 are compositionally biased toward basic and acidic residues. At S255 the chain carries Phosphoserine. The tract at residues Q322 to E368 is nervy homology region 2 (NHR2). The disordered stretch occupies residues R388 to T416. Over residues E393–D410 the composition is skewed to polar residues. The residue at position 400 (S400) is a Phosphoserine. A nervy homology region 3 (NHR3) region spans residues V426–D475. A Glycyl lysine isopeptide (Lys-Gly) (interchain with G-Cter in SUMO2) cross-link involves residue K440. The stretch at Q442 to E482 forms a coiled coil. 8 residues coordinate Zn(2+): C498, C501, C509, C512, C518, C522, H530, and C534. The MYND-type zinc finger occupies C498–C534. The segment at L538–L594 is disordered. S567 bears the Phosphoserine mark. A compositionally biased stretch (low complexity) spans T573–A588.

This sequence belongs to the CBFA2T family. As to quaternary structure, homooligomer. Homotetramerization is mediated by the NHR2 domain. Interacts with CBFA2T3/MTG16. Can interact with RUNX1T1/CBFA2T1. Heterotetramerization between members of the CBFA2T family is proposed. Interacts with RBP, GFI1, TCF4, PRDM14. Interacts with TAL1 and CBFA2T3/MTG16; the heteromer with CBFA2T3/MTG16 may function in repression of TAL1. As to expression, expressed in embryonic stem cells.

Its subcellular location is the nucleus. Functionally, transcriptional corepressor which facilitates transcriptional repression via its association with DNA-binding transcription factors and recruitment of other corepressors and histone-modifying enzymes. Via association with PRDM14 is involved in regulation of embryonic stem cell (ESC) pluripotency. Involved in primordial germ cell (PCG) formation. Stabilizes PRDM14 and OCT4 on chromatin in a homooligomerization-dependent mannerCan repress the expression of MMP7 in a ZBTB33-dependent manner. Through heteromerization with CBFA2T3/MTG16 may be involved in regulation of the proliferation and the differentiation of erythroid progenitors by repressing the expression of TAL1 target genes. Required for the maintenance of the secretory cell lineage in the small intestine. Can inhibit Notch signaling probably by association with RBPJ and may be involved in GFI1-mediated Paneth cell differentiation. This is Protein CBFA2T2 (Cbfa2t2) from Mus musculus (Mouse).